A 787-amino-acid chain; its full sequence is DNA ligase (787 aa).

NAD(+) is bound by residues 32-36 (DAEYD), 81-82 (SL), and E121. The N6-AMP-lysine intermediate role is filled by K123. Residues R144, E181, K297, and K321 each coordinate NAD(+). The Zn(2+) site is built by C415, C418, C445, and C451. The 85-residue stretch at 703–787 (VEGLPLAGQT…RLTELGVAVD (85 aa)) folds into the BRCT domain.

This sequence belongs to the NAD-dependent DNA ligase family. LigA subfamily. Mg(2+) is required as a cofactor. Mn(2+) serves as cofactor.

The catalysed reaction is NAD(+) + (deoxyribonucleotide)n-3'-hydroxyl + 5'-phospho-(deoxyribonucleotide)m = (deoxyribonucleotide)n+m + AMP + beta-nicotinamide D-nucleotide.. DNA ligase that catalyzes the formation of phosphodiester linkages between 5'-phosphoryl and 3'-hydroxyl groups in double-stranded DNA using NAD as a coenzyme and as the energy source for the reaction. It is essential for DNA replication and repair of damaged DNA. This is DNA ligase from Pseudomonas syringae pv. tomato (strain ATCC BAA-871 / DC3000).